The sequence spans 206 residues: Enterobactin synthase component D (206 aa).

Residues Asp107, Glu109, and Glu152 each contribute to the Mg(2+) site.

This sequence belongs to the P-Pant transferase superfamily. EntD family. EntB, EntD, EntE, and EntF form a multienzyme complex called enterobactin synthase. Mg(2+) serves as cofactor.

It is found in the membrane. It carries out the reaction apo-[aryl-carrier protein] + CoA = holo-[aryl-carrier protein] + adenosine 3',5'-bisphosphate + H(+). The catalysed reaction is apo-[peptidyl-carrier protein] + CoA = holo-[peptidyl-carrier protein] + adenosine 3',5'-bisphosphate + H(+). Its pathway is siderophore biosynthesis; enterobactin biosynthesis. Its function is as follows. Involved in the biosynthesis of the siderophore enterobactin (enterochelin), which is a macrocyclic trimeric lactone of N-(2,3-dihydroxybenzoyl)-serine. The serine trilactone serves as a scaffolding for the three catechol functionalities that provide hexadentate coordination for the tightly ligated iron(2+) atoms. Plays an essential role in the assembly of the enterobactin by catalyzing the transfer of the 4'-phosphopantetheine (Ppant) moiety from coenzyme A to the apo-domains of both EntB (ArCP domain) and EntF (PCP domain) to yield their holo-forms which make them competent for the activation of 2,3-dihydroxybenzoate (DHB) and L-serine, respectively. The sequence is that of Enterobactin synthase component D from Escherichia coli (strain K12).